A 183-amino-acid chain; its full sequence is YPLLPLSDLFAKAVHRAQHLHLVAAETTKDFERKYIPEEQRHSHKSSPSAFCQSETIPAPTGKEDAQQRSDRELLLYSLLLIQSWLNPIQNLSAFRTSDRVYDKLRDLEEGIFALMKTLEDGGSSQGFAWLKFSYERFDGNLSEEALMKNYGLLACFKKDMHKVETYLKVMNCKRFAESNCTV.

His-19 is a binding site for Zn(2+). The tract at residues 38-67 is disordered; the sequence is EEQRHSHKSSPSAFCQSETIPAPTGKEDAQ. Residues 46 to 56 are compositionally biased toward polar residues; it reads SSPSAFCQSET. The cysteines at positions 52 and 156 are disulfide-linked. Glu-165 provides a ligand contact to Zn(2+). The cysteines at positions 173 and 181 are disulfide-linked.

The protein belongs to the somatotropin/prolactin family.

It is found in the secreted. Its function is as follows. Growth hormone plays an important role in growth control and is involved in the regulation of several anabolic processes. Implicated as an osmoregulatory substance important for seawater adaptation. This is Somatotropin (gh) from Prionace glauca (Blue shark).